Consider the following 456-residue polypeptide: MASFPPSLVFTVRRNEPTLVLPSKSTPRELKQLSDIDDQEGLRFQVPVIMFYKRKLSMEGEDPVKVIREALAEALVFYYPFAGRLIEGPNRKLMVDCTSEGVLFIEADADIEVNQLIGDTIDPGFSYLDELLHDVPGSEGILGCPLLLIQVTRFRCGGWAFAIRLNHTMSDAPGLVQLLTTIAEFARGAEGAPSVPPVWQREFLAARQPPSITFQHHEYEQVINTTTDDNKSMTHKSFFFGPKEIRAIRSHFPPHYRSVSSTFDVLTACLWRCRTCALGLDPPKTVRISCAANGRGKHDLHVPRGYYGNVFAFPAVVSRAGMISTSSLEYTVEEVKKAKARMTGEYLRSVADLMVTKGRPLYTVAGNYIVSDTTRVGFDAIDFGWGKPVYGGPARAFPLISFYARFKNNRGEDGTVVLICLPEAAMKRFQDELKKMTEEHVDGPFEYKLIKVMSKL.

Residues histidine 167 and aspartate 382 each act as proton acceptor in the active site.

This sequence belongs to the plant acyltransferase family. As to expression, expressed in fruit.

The catalysed reaction is 3-(methylsulfanyl)propanoyl-CoA + butan-1-ol = butyl 3-(methylsulfanyl)propanoate + CoA. The enzyme catalyses ethanol + benzoyl-CoA = ethyl benzoate + CoA. It carries out the reaction butan-1-ol + benzoyl-CoA = butyl benzoate + CoA. It catalyses the reaction 2-(methylsulfanyl)acetyl-CoA + butan-1-ol = butyl 2-(methylsulfanyl)acetate + CoA. Involved in the biosynthesis of volatile esters which confer kiwifruit flavor. Alcohol acyl transferase that can use a wide range of alcohols as substrate to produce esters. Exhibits benzoyl-CoA:alcohol O-acyltransferase activity. The sequence is that of Alcohol acyltransferase 16 from Actinidia chinensis var. chinensis (Chinese soft-hair kiwi).